The primary structure comprises 505 residues: N-succinylglutamate 5-semialdehyde dehydrogenase (505 aa).

234 to 239 (GSAHTG) provides a ligand contact to NAD(+). Active-site residues include glutamate 257 and cysteine 291.

The protein belongs to the aldehyde dehydrogenase family. AstD subfamily.

It carries out the reaction N-succinyl-L-glutamate 5-semialdehyde + NAD(+) + H2O = N-succinyl-L-glutamate + NADH + 2 H(+). It functions in the pathway amino-acid degradation; L-arginine degradation via AST pathway; L-glutamate and succinate from L-arginine: step 4/5. In terms of biological role, catalyzes the NAD-dependent reduction of succinylglutamate semialdehyde into succinylglutamate. This chain is N-succinylglutamate 5-semialdehyde dehydrogenase, found in Yersinia pestis (strain Pestoides F).